The chain runs to 352 residues: MSESELLGPRAYGEACGQALLKACAEDFQVDEVLDIPLSGQGEHLWLWVEKRGLNTEEAARRLARAAGMPLKAISYAGLKDRQALTRQWFSLHLPGKADPDLVAAEDDSLRILERVRHSRKLQRGAHAANGFKLRLTRLAADRPALDARLEQLRRQGVPNYFGLQRFGHDGGNLAEARAFAVRRELPAQRNLRSRLLSAARSYLFNRVLAERVAVGDWNRAQPGDLLAFTDSRSFFPAGVEECADPRLALLDLHPTGPLWGAGGSPAGAATKVLEDAVGRCEAPLGDWLGEAGMLHERRILRLPIDRLAWHYPAIDILQLEFVLPAGCFATVVVRELVDLWPAGLMDTSCVF.

Aspartate 81 functions as the Nucleophile in the catalytic mechanism. In terms of domain architecture, TRUD spans 157–303 (GVPNYFGLQR…MLHERRILRL (147 aa)).

The protein belongs to the pseudouridine synthase TruD family.

It carries out the reaction uridine(13) in tRNA = pseudouridine(13) in tRNA. In terms of biological role, responsible for synthesis of pseudouridine from uracil-13 in transfer RNAs. This chain is tRNA pseudouridine synthase D, found in Azotobacter vinelandii (strain DJ / ATCC BAA-1303).